The primary structure comprises 421 residues: Phosphoglycerate kinase, cytosolic (421 aa).

Residues V23, D24, F25, N26, R39, S61, H62, G64, R65, R135, H172, and R173 each contribute to the (2R)-3-phosphoglycerate site. Residues G218 and A219 each contribute to the ADP site. G218 serves as a coordination point for CDP. Residues A219 and K220 each contribute to the AMP site. A219 contacts ATP. A Mg(2+)-binding site is contributed by A219. K220 is a (2R)-3-phosphoglycerate binding site. Position 223 (D223) interacts with CDP. D223 provides a ligand contact to Mg(2+). ADP-binding residues include K224 and G242. K224 lines the AMP pocket. K224 serves as a coordination point for ATP. G242 contributes to the CDP binding site. Residues A243 and A315 each coordinate AMP. Residues A243 and A315 each coordinate ATP. Residues A315 and N339 each contribute to the ADP site. CDP contacts are provided by G340 and F345. The ADP site is built by F345, E346, D378, and S379. E346 lines the AMP pocket. Residues E346, D378, and S379 each coordinate ATP. D378 is a binding site for Mg(2+).

Belongs to the phosphoglycerate kinase family. In terms of assembly, monomer. The cofactor is Mg(2+).

The protein resides in the cytoplasm. The catalysed reaction is (2R)-3-phosphoglycerate + ATP = (2R)-3-phospho-glyceroyl phosphate + ADP. The protein operates within carbohydrate degradation; glycolysis; pyruvate from D-glyceraldehyde 3-phosphate: step 2/5. This Trypanosoma brucei brucei protein is Phosphoglycerate kinase, cytosolic.